We begin with the raw amino-acid sequence, 311 residues long: Histidine decarboxylase proenzyme (311 aa).

Substrate contacts are provided by Asp64 and Ser82. Ser83 bears the Pyruvic acid (Ser) mark. Glu198 serves as the catalytic Proton donor.

In terms of assembly, the proenzyme is a hexamer of identical pi chains; each pi chain monomer is cleaved to form a small (or beta) chain and a large (or alpha) chain by non-hydrolytic self-catalysis. The cofactor is pyruvate.

It carries out the reaction L-histidine + H(+) = histamine + CO2. The protein is Histidine decarboxylase proenzyme (hdcA) of Lactobacillus sp. (strain 30a).